A 328-amino-acid chain; its full sequence is Reticulocalbin-3 (328 aa).

The N-terminal stretch at 1–20 is a signal peptide; it reads MMWRPSVLLLLLLLRHGAQG. A disordered region spans residues 19–49; that stretch reads QGKPSPDAGPHGQGRVHQAAPLSDAPHDDAH. EF-hand domains are found at residues 75-112, 113-148, 163-198, 200-235, 241-276, and 277-312; these read ESQARLGRIVDRMDRAGDGDGWVSLAELRAWIAHTQQR, HIRDSVSAAWDTYDTDRDGRVGWEELRNATYGHYAP, KMLARDERRFRVADQDGDSMATREELTAFLHPEEFP, MRDIVIAETLEDLDRNKDGYVQVEEYIADLYSAEPG, WVQTERQQFRDFRDLNKDGHLDGSEVGHWVLPPAQD, and QPLVEANHLLHESDTDKDGRLSKAEILGNWNMFVGS. Asp92, Asp94, Trp96, Glu101, Asp126, Asp128, Asp130, Arg132, and Glu137 together coordinate Ca(2+). A glycan (N-linked (GlcNAc...) asparagine) is linked at Asn140. Residues Asp176, Asp178, Asp180, Met182, Glu187, Asp213, Asn215, Asp217, Tyr219, Glu224, Asp254, Asn256, Asp258, His260, Glu265, Asp290, Asp292, Asp294, Arg296, and Glu301 each contribute to the Ca(2+) site. The Prevents secretion from ER signature appears at 325-328; sequence HDEL.

It belongs to the CREC family. In terms of assembly, interacts with PCSK6 (immature form including the propeptide); probably involved in the maturation and the secretion of PCSK6. Post-translationally, degraded by PCSK6 and other endoproteases including FURIN and PCSK5. In terms of processing, N-glycosylated. As to expression, widely expressed.

The protein resides in the endoplasmic reticulum lumen. Functionally, probable molecular chaperone assisting protein biosynthesis and transport in the endoplasmic reticulum. Required for the proper biosynthesis and transport of pulmonary surfactant-associated protein A/SP-A, pulmonary surfactant-associated protein D/SP-D and the lipid transporter ABCA3. By regulating both the proper expression and the degradation through the endoplasmic reticulum-associated protein degradation pathway of these proteins plays a crucial role in pulmonary surfactant homeostasis. Has an anti-fibrotic activity by negatively regulating the secretion of type I and type III collagens. This calcium-binding protein also transiently associates with immature PCSK6 and regulates its secretion. The sequence is that of Reticulocalbin-3 from Homo sapiens (Human).